Here is a 289-residue protein sequence, read N- to C-terminus: 4-hydroxy-3-methylbut-2-enyl diphosphate reductase (289 aa).

Cysteine 12 provides a ligand contact to [4Fe-4S] cluster. (2E)-4-hydroxy-3-methylbut-2-enyl diphosphate is bound by residues histidine 41 and histidine 84. Dimethylallyl diphosphate is bound by residues histidine 41 and histidine 84. The isopentenyl diphosphate site is built by histidine 41 and histidine 84. Cysteine 106 provides a ligand contact to [4Fe-4S] cluster. Histidine 134 provides a ligand contact to (2E)-4-hydroxy-3-methylbut-2-enyl diphosphate. Residue histidine 134 coordinates dimethylallyl diphosphate. Histidine 134 contributes to the isopentenyl diphosphate binding site. The Proton donor role is filled by glutamate 136. Serine 172 lines the (2E)-4-hydroxy-3-methylbut-2-enyl diphosphate pocket. Cysteine 200 serves as a coordination point for [4Fe-4S] cluster. 3 residues coordinate (2E)-4-hydroxy-3-methylbut-2-enyl diphosphate: serine 229, asparagine 231, and serine 273. Positions 229, 231, and 273 each coordinate dimethylallyl diphosphate. Residues serine 229, asparagine 231, and serine 273 each contribute to the isopentenyl diphosphate site.

Belongs to the IspH family. It depends on [4Fe-4S] cluster as a cofactor.

It catalyses the reaction isopentenyl diphosphate + 2 oxidized [2Fe-2S]-[ferredoxin] + H2O = (2E)-4-hydroxy-3-methylbut-2-enyl diphosphate + 2 reduced [2Fe-2S]-[ferredoxin] + 2 H(+). It carries out the reaction dimethylallyl diphosphate + 2 oxidized [2Fe-2S]-[ferredoxin] + H2O = (2E)-4-hydroxy-3-methylbut-2-enyl diphosphate + 2 reduced [2Fe-2S]-[ferredoxin] + 2 H(+). It functions in the pathway isoprenoid biosynthesis; dimethylallyl diphosphate biosynthesis; dimethylallyl diphosphate from (2E)-4-hydroxy-3-methylbutenyl diphosphate: step 1/1. Its pathway is isoprenoid biosynthesis; isopentenyl diphosphate biosynthesis via DXP pathway; isopentenyl diphosphate from 1-deoxy-D-xylulose 5-phosphate: step 6/6. In terms of biological role, catalyzes the conversion of 1-hydroxy-2-methyl-2-(E)-butenyl 4-diphosphate (HMBPP) into a mixture of isopentenyl diphosphate (IPP) and dimethylallyl diphosphate (DMAPP). Acts in the terminal step of the DOXP/MEP pathway for isoprenoid precursor biosynthesis. This Opitutus terrae (strain DSM 11246 / JCM 15787 / PB90-1) protein is 4-hydroxy-3-methylbut-2-enyl diphosphate reductase.